The primary structure comprises 341 residues: Methionine import ATP-binding protein MetN 2 (341 aa).

The 240-residue stretch at 2-241 (IQFKNISKHY…PQHPTTKTFI (240 aa)) folds into the ABC transporter domain. 38-45 (GYSGAGKS) contributes to the ATP binding site.

The protein belongs to the ABC transporter superfamily. Methionine importer (TC 3.A.1.24) family. In terms of assembly, the complex is composed of two ATP-binding proteins (MetN), two transmembrane proteins (MetI) and a solute-binding protein (MetQ).

Its subcellular location is the cell inner membrane. The catalysed reaction is L-methionine(out) + ATP + H2O = L-methionine(in) + ADP + phosphate + H(+). It carries out the reaction D-methionine(out) + ATP + H2O = D-methionine(in) + ADP + phosphate + H(+). Functionally, part of the ABC transporter complex MetNIQ involved in methionine import. Responsible for energy coupling to the transport system. This Acinetobacter baylyi (strain ATCC 33305 / BD413 / ADP1) protein is Methionine import ATP-binding protein MetN 2.